The chain runs to 51 residues: uncharacterized protein (51 aa).

The segment at 1-51 (MKRKAEVNEAIKNNNTPTESMDPNSYKTQYHDDPNFRGANRNSKQGQQGGM) is disordered. 2 stretches are compositionally biased toward polar residues: residues 11–28 (IKNN…SYKT) and 40–51 (NRNSKQGQQGGM).

This is an uncharacterized protein from Bacillus subtilis (strain 168).